A 199-amino-acid chain; its full sequence is GTP cyclohydrolase-2 (199 aa).

Residue 52–56 (RMHSE) participates in GTP binding. 3 residues coordinate Zn(2+): Cys-57, Cys-68, and Cys-70. Residues Gln-73, 94-96 (EGR), and Thr-116 contribute to the GTP site. Catalysis depends on Asp-128, which acts as the Proton acceptor. Arg-130 serves as the catalytic Nucleophile. The GTP site is built by Thr-151 and Lys-156.

It belongs to the GTP cyclohydrolase II family. The cofactor is Zn(2+).

The catalysed reaction is GTP + 4 H2O = 2,5-diamino-6-hydroxy-4-(5-phosphoribosylamino)-pyrimidine + formate + 2 phosphate + 3 H(+). It participates in cofactor biosynthesis; riboflavin biosynthesis; 5-amino-6-(D-ribitylamino)uracil from GTP: step 1/4. In terms of biological role, catalyzes the conversion of GTP to 2,5-diamino-6-ribosylamino-4(3H)-pyrimidinone 5'-phosphate (DARP), formate and pyrophosphate. In Aliivibrio salmonicida (strain LFI1238) (Vibrio salmonicida (strain LFI1238)), this protein is GTP cyclohydrolase-2.